The primary structure comprises 326 residues: Ribosomal large subunit pseudouridine synthase D (326 aa).

The S4 RNA-binding domain occupies 18–91; sequence QRLDQALAEM…IPLDIVYEDD (74 aa). Residue D139 is part of the active site. Residues 183 to 203 are disordered; it reads GTVNEPISRHPTKRTHMSVHP.

This sequence belongs to the pseudouridine synthase RluA family.

The protein localises to the cytoplasm. The enzyme catalyses uridine(1911/1915/1917) in 23S rRNA = pseudouridine(1911/1915/1917) in 23S rRNA. Its function is as follows. Responsible for synthesis of pseudouridine from uracil at positions 1911, 1915 and 1917 in 23S ribosomal RNA. This Salmonella typhi protein is Ribosomal large subunit pseudouridine synthase D (rluD).